The following is a 147-amino-acid chain: MSLKLYKTSISIFLILLIDQITKYLAIKFLSPDGIVKLLPFLNLVYVENTGTAFGMFKFLGSGFFIIIALVVTGFLVYMYFKDTQNWFIYSLIIAGALGNIIDRLIYGYVIDFIDLHLKNLHWPAFNVADSAISIGIVLFVYKNLKK.

4 consecutive transmembrane segments (helical) span residues 10–30, 34–54, 59–79, and 87–107; these read ISIFLILLIDQITKYLAIKFL, GIVKLLPFLNLVYVENTGTAF, FLGSGFFIIIALVVTGFLVYM, and WFIYSLIIAGALGNIIDRLIY. Catalysis depends on residues Asp-112 and Asp-130. The chain crosses the membrane as a helical span at residues 121–141; it reads LHWPAFNVADSAISIGIVLFV.

The protein belongs to the peptidase A8 family.

Its subcellular location is the cell inner membrane. It carries out the reaction Release of signal peptides from bacterial membrane prolipoproteins. Hydrolyzes -Xaa-Yaa-Zaa-|-(S,diacylglyceryl)Cys-, in which Xaa is hydrophobic (preferably Leu), and Yaa (Ala or Ser) and Zaa (Gly or Ala) have small, neutral side chains.. Its pathway is protein modification; lipoprotein biosynthesis (signal peptide cleavage). Functionally, this protein specifically catalyzes the removal of signal peptides from prolipoproteins. The chain is Lipoprotein signal peptidase from Thermodesulfovibrio yellowstonii (strain ATCC 51303 / DSM 11347 / YP87).